Reading from the N-terminus, the 413-residue chain is Arginine biosynthesis bifunctional protein ArgJ (413 aa).

Residues Thr-163, Lys-189, Thr-200, Glu-286, Asn-408, and Thr-413 each contribute to the substrate site. The active-site Nucleophile is Thr-200.

The protein belongs to the ArgJ family. In terms of assembly, heterotetramer of two alpha and two beta chains.

The protein localises to the cytoplasm. It carries out the reaction N(2)-acetyl-L-ornithine + L-glutamate = N-acetyl-L-glutamate + L-ornithine. The enzyme catalyses L-glutamate + acetyl-CoA = N-acetyl-L-glutamate + CoA + H(+). It participates in amino-acid biosynthesis; L-arginine biosynthesis; L-ornithine and N-acetyl-L-glutamate from L-glutamate and N(2)-acetyl-L-ornithine (cyclic): step 1/1. It functions in the pathway amino-acid biosynthesis; L-arginine biosynthesis; N(2)-acetyl-L-ornithine from L-glutamate: step 1/4. Catalyzes two activities which are involved in the cyclic version of arginine biosynthesis: the synthesis of N-acetylglutamate from glutamate and acetyl-CoA as the acetyl donor, and of ornithine by transacetylation between N(2)-acetylornithine and glutamate. This is Arginine biosynthesis bifunctional protein ArgJ from Staphylococcus aureus (strain COL).